Reading from the N-terminus, the 132-residue chain is Large ribosomal subunit protein uL22 (132 aa).

The protein belongs to the universal ribosomal protein uL22 family. As to quaternary structure, part of the 50S ribosomal subunit.

Its function is as follows. This protein binds specifically to 23S rRNA; its binding is stimulated by other ribosomal proteins, e.g. L4, L17, and L20. It is important during the early stages of 50S assembly. It makes multiple contacts with different domains of the 23S rRNA in the assembled 50S subunit and ribosome. Functionally, the globular domain of the protein is located near the polypeptide exit tunnel on the outside of the subunit, while an extended beta-hairpin is found that lines the wall of the exit tunnel in the center of the 70S ribosome. This is Large ribosomal subunit protein uL22 from Rhodospirillum centenum (strain ATCC 51521 / SW).